The following is a 208-amino-acid chain: Thymidylate kinase (208 aa).

Residue 10–17 (GPEGSGKT) coordinates ATP.

This sequence belongs to the thymidylate kinase family.

The catalysed reaction is dTMP + ATP = dTDP + ADP. Its function is as follows. Phosphorylation of dTMP to form dTDP in both de novo and salvage pathways of dTTP synthesis. This chain is Thymidylate kinase, found in Bacillus cereus (strain 03BB102).